Consider the following 484-residue polypeptide: Cysteine--tRNA ligase (484 aa).

Zn(2+) is bound at residue C29. A 'HIGH' region motif is present at residues 31–41 (PTVQSAPHIGH). Zn(2+)-binding residues include C219, H244, and E248. Positions 275–279 (KMSKS) match the 'KMSKS' region motif. K278 contributes to the ATP binding site.

It belongs to the class-I aminoacyl-tRNA synthetase family. In terms of assembly, monomer. The cofactor is Zn(2+).

The protein resides in the cytoplasm. The catalysed reaction is tRNA(Cys) + L-cysteine + ATP = L-cysteinyl-tRNA(Cys) + AMP + diphosphate. In Clavibacter michiganensis subsp. michiganensis (strain NCPPB 382), this protein is Cysteine--tRNA ligase.